The following is a 372-amino-acid chain: DNA/RNA-binding protein ALBA4 (372 aa).

This sequence belongs to the histone-like Alba family. As to quaternary structure, identified in a TARE6-associated complex consisting of over 30 proteins and including ALBA1, ALBA2 and ALBA4; the complex binds to the non-coding subtelomeric repeat region TARE6.

The protein localises to the nucleus. Its subcellular location is the chromosome. The protein resides in the telomere. It localises to the cytoplasm. Possesses DNA- and RNA-binding activities. Binds to DNA fragments longer than 14 base pairs with relaxed sequence specificity. Associates with the subtelomeric TARE6 repeats. Regulates the abundance of transcript sub-populations in a stage-specific manner. Regulates activation of male gametocytes. Participates in the coordination of sporozoite development in the oocyst. This chain is DNA/RNA-binding protein ALBA4, found in Plasmodium falciparum (isolate 3D7).